Reading from the N-terminus, the 184-residue chain is Peptidoglycan-recognition protein SC2 (184 aa).

The signal sequence occupies residues 1–20; that stretch reads MANKALILLAVLFCAQAVLG. One can recognise an N-acetylmuramoyl-L-alanine amidase domain in the interval 45 to 169; that stretch reads SYAVIHHTAG…RQVGSTECPG (125 aa). His-50 is a Zn(2+) binding site. A disulfide bridge connects residues Cys-57 and Cys-63. Positions 159 and 167 each coordinate Zn(2+).

It belongs to the N-acetylmuramoyl-L-alanine amidase 2 family. Zn(2+) is required as a cofactor. Constitutively expressed at high level in gut, in addition to the induced expression in fat body.

The protein resides in the secreted. The catalysed reaction is Hydrolyzes the link between N-acetylmuramoyl residues and L-amino acid residues in certain cell-wall glycopeptides.. Its function is as follows. N-acetylmuramyl-L-alanine amidase involved in innate immunity by degrading bacterial peptidoglycans (PGN). Probably plays a scavenger role by digesting biologically active PGN into biologically inactive fragments. Has no direct bacteriolytic activity. This is Peptidoglycan-recognition protein SC2 (PGRP-SC2) from Drosophila melanogaster (Fruit fly).